We begin with the raw amino-acid sequence, 966 residues long: Catenin alpha-2 (966 aa).

Positions 924–940 (PEKKPLVKREKPEEYQT) are enriched in basic and acidic residues. Residues 924–952 (PEKKPLVKREKPEEYQTRVRRGSQKKHIS) form a disordered region. The span at 941–951 (RVRRGSQKKHI) shows a compositional bias: basic residues.

The protein belongs to the vinculin/alpha-catenin family.

It localises to the cell membrane. The protein localises to the cytoplasm. It is found in the cytoskeleton. Its subcellular location is the cell junction. The protein resides in the adherens junction. It localises to the cell projection. The protein localises to the axon. It is found in the nucleus. May function as a linker between cadherin adhesion receptors and the cytoskeleton to regulate cell-cell adhesion and differentiation in the nervous system. The sequence is that of Catenin alpha-2 (ctnna2) from Xenopus laevis (African clawed frog).